Here is a 445-residue protein sequence, read N- to C-terminus: Tubulin beta-2B chain (445 aa).

The short motif at 1–4 (MREI) is the MREI motif element. A GTP-binding site is contributed by glutamine 11. Serine 40 carries the phosphoserine modification. The residue at position 55 (threonine 55) is a Phosphothreonine. Residue lysine 58 is modified to N6-acetyllysine; alternate. Lysine 58 carries the N6-succinyllysine; alternate modification. Residue lysine 58 forms a Glycyl lysine isopeptide (Lys-Gly) (interchain with G-Cter in ubiquitin); alternate linkage. GTP-binding residues include glutamate 69, serine 138, glycine 142, threonine 143, and glycine 144. Mg(2+) is bound at residue glutamate 69. Residue serine 172 is modified to Phosphoserine; by CDK1. Residues asparagine 204 and asparagine 226 each contribute to the GTP site. Phosphothreonine is present on residues threonine 285 and threonine 290. At arginine 318 the chain carries Omega-N-methylarginine. Lysine 324 participates in a covalent cross-link: Glycyl lysine isopeptide (Lys-Gly) (interchain with G-Cter in ubiquitin). The disordered stretch occupies residues 422–445 (YQQYQDATADEQGEFEEEEGEDEA). A compositionally biased stretch (acidic residues) spans 429–445 (TADEQGEFEEEEGEDEA). Glutamate 438 carries the 5-glutamyl polyglutamate modification.

It belongs to the tubulin family. Dimer of alpha and beta chains. A typical microtubule is a hollow water-filled tube with an outer diameter of 25 nm and an inner diameter of 15 nM. Alpha-beta heterodimers associate head-to-tail to form protofilaments running lengthwise along the microtubule wall with the beta-tubulin subunit facing the microtubule plus end conferring a structural polarity. Microtubules usually have 13 protofilaments but different protofilament numbers can be found in some organisms and specialized cells. It depends on Mg(2+) as a cofactor. Post-translationally, some glutamate residues at the C-terminus are polyglycylated, resulting in polyglycine chains on the gamma-carboxyl group. Glycylation is mainly limited to tubulin incorporated into axonemes (cilia and flagella) whereas glutamylation is prevalent in neuronal cells, centrioles, axonemes, and the mitotic spindle. Both modifications can coexist on the same protein on adjacent residues, and lowering polyglycylation levels increases polyglutamylation, and reciprocally. The precise function of polyglycylation is still unclear. In terms of processing, some glutamate residues at the C-terminus are polyglutamylated, resulting in polyglutamate chains on the gamma-carboxyl group. Polyglutamylation plays a key role in microtubule severing by spastin (SPAST). SPAST preferentially recognizes and acts on microtubules decorated with short polyglutamate tails: severing activity by SPAST increases as the number of glutamates per tubulin rises from one to eight, but decreases beyond this glutamylation threshold. Phosphorylated on Ser-172 by CDK1 during the cell cycle, from metaphase to telophase, but not in interphase. This phosphorylation inhibits tubulin incorporation into microtubules.

The protein resides in the cytoplasm. It localises to the cytoskeleton. Tubulin is the major constituent of microtubules, a cylinder consisting of laterally associated linear protofilaments composed of alpha- and beta-tubulin heterodimers. Microtubules grow by the addition of GTP-tubulin dimers to the microtubule end, where a stabilizing cap forms. Below the cap, tubulin dimers are in GDP-bound state, owing to GTPase activity of alpha-tubulin. Implicated in neuronal migration. The polypeptide is Tubulin beta-2B chain (TUBB2B) (Bos taurus (Bovine)).